A 118-amino-acid polypeptide reads, in one-letter code: Large ribosomal subunit protein bL20 (118 aa).

This sequence belongs to the bacterial ribosomal protein bL20 family.

In terms of biological role, binds directly to 23S ribosomal RNA and is necessary for the in vitro assembly process of the 50S ribosomal subunit. It is not involved in the protein synthesizing functions of that subunit. In Pelagibacter ubique (strain HTCC1062), this protein is Large ribosomal subunit protein bL20.